The following is a 302-amino-acid chain: Nucleotide-binding protein Bcenmc03_2806 (302 aa).

Position 8 to 15 (8 to 15 (GISGSGKS)) interacts with ATP. 57 to 60 (DARS) is a GTP binding site.

The protein belongs to the RapZ-like family.

Functionally, displays ATPase and GTPase activities. The polypeptide is Nucleotide-binding protein Bcenmc03_2806 (Burkholderia orbicola (strain MC0-3)).